Reading from the N-terminus, the 173-residue chain is NADH-ubiquinone oxidoreductase chain 6 (173 aa).

A run of 5 helical transmembrane segments spans residues 1–21 (MVYFVSMMMIGLILGLMGVAS), 28–48 (AALGLVTAAGVGCGLLVSYGG), 53–73 (LILFLIYLGGMLVVFAYTAAL), 87–107 (VLMYVGIYLTGLVIAGKYFLV), and 139–159 (LGGWMLVLSGWVLLVTLFVVL).

This sequence belongs to the complex I subunit 6 family.

The protein resides in the mitochondrion membrane. It catalyses the reaction a ubiquinone + NADH + 5 H(+)(in) = a ubiquinol + NAD(+) + 4 H(+)(out). Functionally, core subunit of the mitochondrial membrane respiratory chain NADH dehydrogenase (Complex I) that is believed to belong to the minimal assembly required for catalysis. Complex I functions in the transfer of electrons from NADH to the respiratory chain. The immediate electron acceptor for the enzyme is believed to be ubiquinone. The protein is NADH-ubiquinone oxidoreductase chain 6 (MT-ND6) of Scyliorhinus canicula (Small-spotted catshark).